A 388-amino-acid chain; its full sequence is Succinate--CoA ligase [ADP-forming] subunit beta (388 aa).

The region spanning 9 to 244 is the ATP-grasp domain; it reads KQLFARYGLP…QSQEDPREAQ (236 aa). ATP contacts are provided by residues K46, 53–55, E99, T102, and E107; that span reads GRG. Residues N199 and D213 each contribute to the Mg(2+) site. Substrate-binding positions include N264 and 321–323; that span reads GIV.

This sequence belongs to the succinate/malate CoA ligase beta subunit family. As to quaternary structure, heterotetramer of two alpha and two beta subunits. The cofactor is Mg(2+).

The catalysed reaction is succinate + ATP + CoA = succinyl-CoA + ADP + phosphate. The enzyme catalyses GTP + succinate + CoA = succinyl-CoA + GDP + phosphate. The protein operates within carbohydrate metabolism; tricarboxylic acid cycle; succinate from succinyl-CoA (ligase route): step 1/1. Succinyl-CoA synthetase functions in the citric acid cycle (TCA), coupling the hydrolysis of succinyl-CoA to the synthesis of either ATP or GTP and thus represents the only step of substrate-level phosphorylation in the TCA. The beta subunit provides nucleotide specificity of the enzyme and binds the substrate succinate, while the binding sites for coenzyme A and phosphate are found in the alpha subunit. The sequence is that of Succinate--CoA ligase [ADP-forming] subunit beta from Escherichia coli O139:H28 (strain E24377A / ETEC).